The primary structure comprises 303 residues: MTNNKFKSGFVAILGRPNVGKSTFMNHVMGQKIAIMSDKPQTTRNKIQGIYTTENEQIVFIDTPGIHKPHNALGDFMVQSAYSTLRECDVVLFMVAADEPRSTGENMIIERLKKAEVPVILVVNKIDKIHPDRLFEIVADYTSQMEFSEVVPISAKQGNNTERLIDTLSEKLDEGPQYFPEDQITDHPERFLVSEMIREKILLLTREEVPHSIAVTTDQMTRDEETGKIHIMATIIVERKSQKGIILGKGGDMIRKIGKMARRDIEIMLGDKVYLETWVKIKNDWRDRKMDLADFGYNRDDYM.

Positions 7–174 constitute an Era-type G domain; it reads KSGFVAILGR…IDTLSEKLDE (168 aa). A G1 region spans residues 15 to 22; that stretch reads GRPNVGKS. GTP is bound at residue 15–22; sequence GRPNVGKS. The segment at 41-45 is G2; the sequence is QTTRN. Positions 62 to 65 are G3; that stretch reads DTPG. GTP contacts are provided by residues 62-66 and 124-127; these read DTPGI and NKID. Residues 124 to 127 form a G4 region; the sequence is NKID. Residues 153-155 form a G5 region; it reads ISA. In terms of domain architecture, KH type-2 spans 205-283; the sequence is TREEVPHSIA…YLETWVKIKN (79 aa).

The protein belongs to the TRAFAC class TrmE-Era-EngA-EngB-Septin-like GTPase superfamily. Era GTPase family. In terms of assembly, monomer.

Its subcellular location is the cytoplasm. The protein resides in the cell membrane. An essential GTPase that binds both GDP and GTP, with rapid nucleotide exchange. Plays a role in 16S rRNA processing and 30S ribosomal subunit biogenesis and possibly also in cell cycle regulation and energy metabolism. The protein is GTPase Era of Lactococcus lactis subsp. lactis (strain IL1403) (Streptococcus lactis).